A 337-amino-acid polypeptide reads, in one-letter code: MEEIIKPVSKELLKAELTEDRRLRMTNKSNNQIYIITHQNAPNVMREIGRLREIAFRAAGGGTGLSMDIDEYDTMEHPYKQLIVWNPEAEEILGGYRYLLGTDVRFDEAGAPILATSHMFHFSDAFIKEYLPQTIELGRSFVTLEYQSTRAGSKGLFALDNLWDGLGALTVVMPNVKYFFGKVTMYPSYHRRGRDMILYFLKKHFNDREELVTPMEPLILETSDEELRTLFCKDTFKEDYKILNTEIRKLGYNIPPLVNAYMSLSPTMRMFGTAINYEFGDVEETGILIAVDEILEDKRIRHIQTFIESHPDALKMPCESEGVFTPKVVTPQEGCCH.

The protein belongs to the acetyltransferase family.

The catalysed reaction is a (3R)-hydroxyacyl-[ACP] + glycine = a lyso-glycine lipid + holo-[ACP] + H(+). The enzyme catalyses (3R)-hydroxyhexadecanoyl-[ACP] + glycine = N-[(3R)-3-hydroxyhexadecanoyl]-glycine + holo-[ACP] + H(+). It participates in lipid metabolism. Is involved in the production of glycine lipids (GL), which are phosphorus-free membrane lipids important for fitness during growth of the human gut bacterium B.thetaiotaomicron in vivo and in vitro. Catalyzes the first step of GL biosynthesis, i.e. the N-acylation of glycine via addition of a 3-hydroxy fatty acyl group, to form a range of monoacylated glycine (also named lyso-glycine lipids or lyso-GL). Is important for the ability of B.thetaiotaomicron to adapt to stress and colonize the mammalian gut. Also seems to be required for the production of flavolipin, an acylated serine-glycine dipeptide. This is Glycine N(alpha)-acyltransferase from Bacteroides thetaiotaomicron (strain ATCC 29148 / DSM 2079 / JCM 5827 / CCUG 10774 / NCTC 10582 / VPI-5482 / E50).